Here is a 508-residue protein sequence, read N- to C-terminus: UTP--glucose-1-phosphate uridylyltransferase (508 aa).

Ser2 is subject to Blocked amino end (Ser). Ser13 is modified (phosphoserine). Residues 113 to 116, Lys127, Gln190, and Gly222 each bind UTP; that span reads LNGG. Residue 115–116 participates in substrate binding; the sequence is GG. Residue Lys127 participates in Mg(2+) binding. Substrate is bound by residues His223 and 251–253; that span reads NID. Asp253 and Lys396 together coordinate UTP. Asp253 is a Mg(2+) binding site. Lys396 is a catalytic residue. Thr426 is subject to Phosphothreonine. At Ser434 the chain carries Phosphoserine. N6-acetyllysine is present on Lys438. Residues Ser448 and Ser461 each carry the phosphoserine modification. Positions 457–508 are oligomerization; the sequence is HLTVSGDVTFGKNVSLKGTVIIIANHGDRIDIPPGAVLENKIVSGNLRILDH. The critical for end-to-end subunit interaction stretch occupies residues 502 to 503; it reads NL.

This sequence belongs to the UDPGP type 1 family. As to quaternary structure, homooctamer.

The protein localises to the cytoplasm. The enzyme catalyses alpha-D-glucose 1-phosphate + UTP + H(+) = UDP-alpha-D-glucose + diphosphate. Its pathway is glycan biosynthesis; glycogen biosynthesis. UTP--glucose-1-phosphate uridylyltransferase catalyzing the conversion of glucose-1-phosphate into UDP-glucose, a crucial precursor for the production of glycogen. This Bos taurus (Bovine) protein is UTP--glucose-1-phosphate uridylyltransferase (UGP2).